The primary structure comprises 304 residues: MAKHSPQELASVLKDGLLSFPVTSFDSQLQFDEENYRKHLAWQASYPVAGLFAAGGTGEGFSLTPAESARVVRAAVEEVGSTVPVLASAGGSTAQAIENAQAAEAAGAEGILLLPPYLTEADQGGLIEHVSAVCSATSLGVIIYNRANAIYKDTTVAALADRHESLIGFKDGVGDLEHDARVYAKLGDRLFYLGGLPTAETFALPLLQLGMSTYSSAMYNFVPQFALDFYQDVRNHDRVAVNKKLNDFVIPYLDIRDRVKGYSVSIVKGGLDAIGRSAGGVRPPLQNLAPQDLADLKALIATVS.

This sequence belongs to the DapA family.

The enzyme catalyses 5-dehydro-4-deoxy-D-glucarate + H(+) = 2,5-dioxopentanoate + CO2 + H2O. It participates in carbohydrate acid metabolism; D-glucarate degradation; 2,5-dioxopentanoate from D-glucarate: step 2/2. The polypeptide is Probable 5-dehydro-4-deoxyglucarate dehydratase (Arthrobacter sp. (strain FB24)).